The primary structure comprises 658 residues: Alkyldihydroxyacetonephosphate synthase, peroxisomal (658 aa).

2 disordered regions span residues 1–41 (MAEA…LRVL) and 63–86 (AASA…IPKK). A peroxisome-targeting transit peptide spans 1–58 (MAEAAAAAGGTGLGAGASYGSAADRDRDPDPDRAGRRLRVLSGHLLGRPREALSTNEC). A compositionally biased stretch (basic and acidic residues) spans 23-35 (ADRDRDPDPDRAG). The span at 63-77 (AASAATAAPTATPAA) shows a compositional bias: low complexity. Position 65 is a phosphoserine (Ser-65). The residue at position 74 (Thr-74) is a Phosphothreonine. Lys-102 is subject to N6-acetyllysine. In terms of domain architecture, FAD-binding PCMH-type spans 202–384 (FERIPDIVLW…TEATIKIRPV (183 aa)). FAD is bound by residues 234–240 (PIGGGTS), 303–309 (DSLEFST), and 316–319 (TRAS). Position 347 is an N6-acetyllysine (Lys-347). Residue 368–374 (EGTLGVI) coordinates FAD. Arg-515 is a binding site for substrate. Tyr-578 functions as the Proton donor/acceptor in the catalytic mechanism. 2 important for enzyme activity regions span residues 615–617 (HHH) and 654–658 (NRNLL).

The protein belongs to the FAD-binding oxidoreductase/transferase type 4 family. Homodimer. It depends on FAD as a cofactor.

The protein localises to the peroxisome membrane. It localises to the peroxisome. It carries out the reaction a long chain fatty alcohol + a 1-acylglycerone 3-phosphate = a 1-O-alkylglycerone 3-phosphate + a long-chain fatty acid + H(+). It catalyses the reaction hexadecan-1-ol + 1-hexadecanoylglycerone 3-phosphate = 1-O-hexadecylglycerone 3-phosphate + hexadecanoate + H(+). The enzyme catalyses 1-hexadecanoylglycerone 3-phosphate + a long-chain fatty acid = a 1-acylglycerone 3-phosphate + hexadecanoate. It participates in glycerolipid metabolism; ether lipid biosynthesis. Functionally, catalyzes the exchange of the acyl chain in acyl-dihydroxyacetonephosphate (acyl-DHAP) for a long chain fatty alcohol, yielding the first ether linked intermediate, i.e. alkyl-dihydroxyacetonephosphate (alkyl-DHAP), in the pathway of ether lipid biosynthesis. The chain is Alkyldihydroxyacetonephosphate synthase, peroxisomal (AGPS) from Homo sapiens (Human).